Consider the following 357-residue polypeptide: 3-dehydroquinate synthase (357 aa).

NAD(+) is bound by residues 69–74, 103–107, 127–128, Lys-140, and Lys-149; these read DGEKNK, GVIGD, and TT. Residues Glu-182, His-245, and His-262 each coordinate Zn(2+).

It belongs to the sugar phosphate cyclases superfamily. Dehydroquinate synthase family. It depends on Co(2+) as a cofactor. The cofactor is Zn(2+). Requires NAD(+) as cofactor.

It is found in the cytoplasm. The catalysed reaction is 7-phospho-2-dehydro-3-deoxy-D-arabino-heptonate = 3-dehydroquinate + phosphate. It participates in metabolic intermediate biosynthesis; chorismate biosynthesis; chorismate from D-erythrose 4-phosphate and phosphoenolpyruvate: step 2/7. Its function is as follows. Catalyzes the conversion of 3-deoxy-D-arabino-heptulosonate 7-phosphate (DAHP) to dehydroquinate (DHQ). The protein is 3-dehydroquinate synthase of Shewanella denitrificans (strain OS217 / ATCC BAA-1090 / DSM 15013).